The sequence spans 332 residues: L-lactate dehydrogenase C chain (332 aa).

The residue at position 2 (Ser2) is a Blocked amino end (Ser). NAD(+)-binding positions include 29–57 (GNVG…DENK) and Arg99. The substrate site is built by Arg106, Asn138, and Arg169. Residue Asn138 participates in NAD(+) binding. Residue His193 is the Proton acceptor of the active site. Thr248 lines the substrate pocket.

This sequence belongs to the LDH/MDH superfamily. LDH family. In terms of assembly, homotetramer. Interacts with RABL2/RABL2A; binds preferentially to GTP-bound RABL2.

The protein resides in the cytoplasm. It catalyses the reaction (S)-lactate + NAD(+) = pyruvate + NADH + H(+). Its pathway is fermentation; pyruvate fermentation to lactate; (S)-lactate from pyruvate: step 1/1. Functionally, possible role in sperm motility. This is L-lactate dehydrogenase C chain (Ldhc) from Rattus norvegicus (Rat).